An 85-amino-acid polypeptide reads, in one-letter code: Small ribosomal subunit protein bS16 (85 aa).

It belongs to the bacterial ribosomal protein bS16 family.

The chain is Small ribosomal subunit protein bS16 from Pseudomonas savastanoi pv. phaseolicola (strain 1448A / Race 6) (Pseudomonas syringae pv. phaseolicola (strain 1448A / Race 6)).